The sequence spans 345 residues: Putative F-box protein At3g17265 (345 aa).

In terms of domain architecture, F-box spans 1 to 46 (MMFAYLPPDLESEILSRVPATFLKELQTTCKRWYALFRDPIFVKKN).

This is Putative F-box protein At3g17265 from Arabidopsis thaliana (Mouse-ear cress).